Consider the following 309-residue polypeptide: Nucleoside kinase (309 aa).

Residues aspartate 16, glycine 42, and asparagine 46 each contribute to the substrate site. Glutamine 108 is an ATP binding site. Substrate-binding positions include 110–112 and glutamine 166; that span reads SYF. ATP-binding positions include asparagine 189 and 217–223; that span reads KTYGKEG. Aspartate 249 is a binding site for substrate. Aspartate 249 acts as the Proton acceptor in catalysis.

It belongs to the carbohydrate kinase PfkB family. As to quaternary structure, homodimer. The cofactor is Mg(2+).

In terms of biological role, catalyzes the phosphorylation of a wide range of nucleosides to yield nucleoside monophosphates, using ATP, ITP or GTP as phosphate donor. This chain is Nucleoside kinase, found in Methanothermobacter thermautotrophicus (strain ATCC 29096 / DSM 1053 / JCM 10044 / NBRC 100330 / Delta H) (Methanobacterium thermoautotrophicum).